The chain runs to 197 residues: Imidazoleglycerol-phosphate dehydratase (197 aa).

Belongs to the imidazoleglycerol-phosphate dehydratase family.

It localises to the cytoplasm. It carries out the reaction D-erythro-1-(imidazol-4-yl)glycerol 3-phosphate = 3-(imidazol-4-yl)-2-oxopropyl phosphate + H2O. It functions in the pathway amino-acid biosynthesis; L-histidine biosynthesis; L-histidine from 5-phospho-alpha-D-ribose 1-diphosphate: step 6/9. The chain is Imidazoleglycerol-phosphate dehydratase from Alkalilimnicola ehrlichii (strain ATCC BAA-1101 / DSM 17681 / MLHE-1).